The primary structure comprises 86 residues: Maxadilan (86 aa).

The signal sequence occupies residues 1–23 (MKQILLISLVVVLAVFAFNVAEG). 2 cysteine pairs are disulfide-bonded: cysteine 24/cysteine 28 and cysteine 37/cysteine 74.

Interacts with human ADCYAP1R1. As to expression, salivary gland (at protein level).

Its subcellular location is the secreted. Functionally, potent vasodilator. Activates mammalian ADCYAP1R1, a PAC1 receptor, and induces cAMP accumulation in host cells. Causes the development of erythema following superficial injection into the rabbit or human skin. Influences adaptive immune responses mediated by host dendritic cells. Reduces surface expression of CD80 on host dendritic cells stimulated with lipopolysaccharides (LPS) and induces concomitant increase in CD86 expression on a subpopulation of these cells. Redirects cytokine secretion by LPS-activated host dendritic cells toward type 2 responses: decreases secretion of TNF-alpha/TNF, IL-12p40/IL12B and IFN-gamma/IFNG, and increases secretion of IL6 and IL10. Reduces ability of host bone marrow-derived dendritic cells to stimulate proliferation of CD4(+) T-cells. Reprograms the effect of LPS-activated host dendritic cells on cytokine secretion profiles in host T-cells: decreases secretion of TNF-alpha/TNF and IFN-gamma/IFNG, increases secretion of IL6 and IL13, and increases secretion of pro-inflammatory cytokine IL-1beta/IL1B in mixed lymphocyte reaction (MLR) cultures. Reduces LPS-induced up-regulation of CCR7 in activated host dendritic cells. Inhibits IFN-gamma/IFNG and IL-12p40/IL12B production by human peripheral blood mononuclear cells. Increases IL6 and decreases TNF-alpha/TNF production by LPS-stimulated human monocytes. Its function is as follows. (Microbial infection) Probably plays a critical role in the enhancement of Leishmania infectivity in the host attributed to sand fly saliva. The sequence is that of Maxadilan from Lutzomyia longipalpis (Sand fly).